A 96-amino-acid chain; its full sequence is RNA-binding protein Hfq (96 aa).

One can recognise a Sm domain in the interval 9-68 (DPYLNALRRERIPVSIYLVNGIKLQGQIESFDQFVILLKNTVNQMVYKHAISTVVPARSV).

This sequence belongs to the Hfq family. As to quaternary structure, homohexamer.

Its function is as follows. RNA chaperone that binds small regulatory RNA (sRNAs) and mRNAs to facilitate mRNA translational regulation in response to envelope stress, environmental stress and changes in metabolite concentrations. Also binds with high specificity to tRNAs. The polypeptide is RNA-binding protein Hfq (Histophilus somni (strain 129Pt) (Haemophilus somnus)).